Consider the following 351-residue polypeptide: MTIAIGREQERGWFDLLDDWLKRDRFVFIGWSGILLFPCAYLALGAWFTGTTFVSSWYTHGLASSYLEGCNFLTAAVSSPANSMGHSLLFLWGPEAQGDFTRWCQIGGLWTFTALHGSFGLIGFCLRQFEIARLVGLRPYNAIAFSGPIAVFVSVFLLYPLGQASWFFAPSFGVAAIFRFLLFLQGFHNWTLNPFHMMGVAGILGGALLCAIHGATVENTLFEDGEASDTFRAFTPTQSEETYSMVTANRFWSQIFGVAFANKRWLHFFLLFVPVTGLWVSSIGIVGLALNLRAYDFVSQEIRAAEDPEFETFYTKNILLNEGIRAWMAAQDQPHENFVFPEEVLPRGNAL.

Residues 39 to 59 traverse the membrane as a helical segment; sequence CAYLALGAWFTGTTFVSSWYT. His-116 is a binding site for chlorophyll a. The chain crosses the membrane as a helical span at residues 123-139; that stretch reads GFCLRQFEIARLVGLRP. Pheophytin a-binding residues include Gln-128 and Asn-141. A helical transmembrane segment spans residues 151–164; it reads VFVSVFLLYPLGQA. Position 196 (His-196) interacts with chlorophyll a. A helical transmembrane segment spans residues 206–226; sequence GALLCAIHGATVENTLFEDGE. The a plastoquinone site is built by His-213 and Phe-260. His-213 serves as a coordination point for Fe cation. His-267 lines the Fe cation pocket. The helical transmembrane segment at 277 to 293 threads the bilayer; sequence GLWVSSIGIVGLALNLR.

Belongs to the reaction center PufL/M/PsbA/D family. As to quaternary structure, PSII is composed of 1 copy each of membrane proteins PsbA, PsbB, PsbC, PsbD, PsbE, PsbF, PsbH, PsbI, PsbJ, PsbK, PsbL, PsbM, PsbT, PsbY, PsbZ, Psb30/Ycf12, at least 3 peripheral proteins of the oxygen-evolving complex and a large number of cofactors. It forms dimeric complexes. The D1/D2 heterodimer binds P680, chlorophylls that are the primary electron donor of PSII, and subsequent electron acceptors. It shares a non-heme iron and each subunit binds pheophytin, quinone, additional chlorophylls, carotenoids and lipids. There is also a Cl(-1) ion associated with D1 and D2, which is required for oxygen evolution. The PSII complex binds additional chlorophylls, carotenoids and specific lipids. is required as a cofactor.

The protein localises to the plastid. Its subcellular location is the chloroplast thylakoid membrane. The catalysed reaction is 2 a plastoquinone + 4 hnu + 2 H2O = 2 a plastoquinol + O2. Its function is as follows. Photosystem II (PSII) is a light-driven water:plastoquinone oxidoreductase that uses light energy to abstract electrons from H(2)O, generating O(2) and a proton gradient subsequently used for ATP formation. It consists of a core antenna complex that captures photons, and an electron transfer chain that converts photonic excitation into a charge separation. The D1/D2 (PsbA/PsbD) reaction center heterodimer binds P680, the primary electron donor of PSII as well as several subsequent electron acceptors. D2 is needed for assembly of a stable PSII complex. The protein is Photosystem II D2 protein of Cyanidium caldarium (Red alga).